Here is a 464-residue protein sequence, read N- to C-terminus: ATP-dependent protease ATPase subunit HslU (464 aa).

ATP contacts are provided by residues V18, 60–65, D277, E342, and R414; that span reads GVGKTE.

It belongs to the ClpX chaperone family. HslU subfamily. As to quaternary structure, a double ring-shaped homohexamer of HslV is capped on each side by a ring-shaped HslU homohexamer. The assembly of the HslU/HslV complex is dependent on binding of ATP.

The protein localises to the cytoplasm. ATPase subunit of a proteasome-like degradation complex; this subunit has chaperone activity. The binding of ATP and its subsequent hydrolysis by HslU are essential for unfolding of protein substrates subsequently hydrolyzed by HslV. HslU recognizes the N-terminal part of its protein substrates and unfolds these before they are guided to HslV for hydrolysis. The polypeptide is ATP-dependent protease ATPase subunit HslU (Lactobacillus leichmannii).